The chain runs to 338 residues: Photosystem II assembly lipoprotein Ycf48 (338 aa).

The N-terminal stretch at 1 to 23 is a signal peptide; that stretch reads MKRLFSNVINLTLVLIVGVALSG. C24 carries the N-palmitoyl cysteine lipid modification. C24 is lipidated: S-diacylglycerol cysteine.

Belongs to the Ycf48 family. In terms of assembly, part of early PSII assembly complexes which includes D1 (psbA) and PsbI; not found in mature PSII. Binds to the lumenal side of PSII complexes. Interacts with YidC.

The protein localises to the cellular thylakoid membrane. Its function is as follows. A factor required for optimal assembly of photosystem II (PSII), acting in the early stages of PSII assembly. Also plays a role in replacement of photodamaged D1 (psbA). Assists YidC in synthesis of chlorophyll-binding proteins. This is Photosystem II assembly lipoprotein Ycf48 from Prochlorococcus marinus (strain NATL2A).